Reading from the N-terminus, the 66-residue chain is DNA-directed RNA polymerase subunit Rpo10 (66 aa).

Residues Cys-7, Cys-10, Cys-44, and Cys-45 each coordinate Zn(2+).

Belongs to the archaeal Rpo10/eukaryotic RPB10 RNA polymerase subunit family. In terms of assembly, part of the RNA polymerase complex. It depends on Zn(2+) as a cofactor.

The protein resides in the cytoplasm. The catalysed reaction is RNA(n) + a ribonucleoside 5'-triphosphate = RNA(n+1) + diphosphate. Its function is as follows. DNA-dependent RNA polymerase (RNAP) catalyzes the transcription of DNA into RNA using the four ribonucleoside triphosphates as substrates. This Pyrobaculum islandicum (strain DSM 4184 / JCM 9189 / GEO3) protein is DNA-directed RNA polymerase subunit Rpo10.